Consider the following 864-residue polypeptide: MSKSAVSPMMQQYLGIKAQHTDKLVFYRMGDFYEMFFDDAVEAAKLLDITLTTRGQVDGEPVKMAGVPFHAAEQYLARLVKLGKSVAICEQVGEVGAGKGPVERKVVRIVTPGTLTDSALLEDKETNRIVAVSPDKKYIGLAWASLQSGEFKTKLTTVDKLDDELARLQAAEILLPDSKNAPQLQTASGVTRLNAWQFAADAGEKLLTEYFGCQDLRGFGLDGKEHAVAIGAAGALLNYIRLTQNLMPQHLDGLSLETDSQYIGMDAATRRNLEITQTLSGKKSPTLMSTLDLCATHMGSRLLALWLHHPLRNRAHIRARQEAVAALESQYKPLQCRLKNIADIERIAARIAVGNARPRDLASLRDSLFELAQIDLSANGSSLLETLKAVFPENLSTAEQLRQAILPEPSVWLKDGNVINHGFHPELDELRRIQNHGDEFLLDLEAKERERTGLSTLKVEFNRVHGFYIELSKTQAEQAPADYQRRQTLKNAERFITPELKAFEDKVLTAQEQALALEKQLFDGVLKNLQTALPQLQKAAKAAAALDVLSTFSALAKERNFVRPEFADYPAIHIENGRHPVVEQQVRHFTANHTNLDHKHRLMLLTGPNMGGKSTYMRQVALIVLLAHTGCFVPADAATIGPIDQIFTRIGASDDLASNRSTFMVEMSETAYILHHATEQSLVLMDEVGRGTSTFDGLALAHAVAEHLLQKNKSFSLFATHYFELTYLPEAHAAAVNMHLSALEQGQDIVFLHQIQPGPAGKSYGIAVAKLAGLPVRALKSAQKHLNGLENQAAANRPQLDIFSTMPSEKGDEPNVGNFVDKAEEKHFEGILAAALEKLDPDSLTPREALSELYRLKDLCKSVS.

Residue 607-614 (GPNMGGKS) participates in ATP binding.

Belongs to the DNA mismatch repair MutS family.

In terms of biological role, this protein is involved in the repair of mismatches in DNA. It is possible that it carries out the mismatch recognition step. This protein has a weak ATPase activity. This Neisseria meningitidis serogroup A / serotype 4A (strain DSM 15465 / Z2491) protein is DNA mismatch repair protein MutS.